A 750-amino-acid chain; its full sequence is Cellulose synthase-like protein H1 (750 aa).

2 helical membrane passes run 27-47 and 52-72; these read LAIL…DSGA and AALA…NAKW. Residues Asp-137 and Asp-459 contribute to the active site. 6 helical membrane passes run 537-557, 570-590, 608-628, 664-684, 697-717, and 727-747; these read VWPV…YCLL, GFYI…MEFI, ITSA…TLGF, VFIP…VGAW, GPGI…MPLL, and GIPW…LLFC.

It belongs to the glycosyltransferase 2 family. Plant cellulose synthase-like H subfamily.

It is found in the golgi apparatus membrane. Its function is as follows. Thought to be a Golgi-localized beta-glycan synthase that polymerize the backbones of noncellulosic polysaccharides (hemicelluloses) of plant cell wall. This chain is Cellulose synthase-like protein H1 (CSLH1), found in Oryza sativa subsp. japonica (Rice).